The chain runs to 520 residues: Phospholipase C A (520 aa).

Positions 1-38 form a signal peptide, tat-type signal; sequence MSASPLLGMSRREFLTKLTGAGAAAFLMDWAAPVIEKA.

It belongs to the bacterial phospholipase C family. In terms of processing, predicted to be exported by the Tat system. The position of the signal peptide cleavage has not been experimentally proven.

It localises to the secreted. It is found in the cell wall. It catalyses the reaction a 1,2-diacyl-sn-glycero-3-phosphocholine + H2O = phosphocholine + a 1,2-diacyl-sn-glycerol + H(+). In terms of biological role, involved in virulence. Induces cytotoxic effects on mouse macrophage cell lines, via direct or indirect enzymatic hydrolysis of cell membrane phospholipids. Hydrolyzes phosphatidylcholine. This Mycobacterium tuberculosis (strain CDC 1551 / Oshkosh) protein is Phospholipase C A.